The primary structure comprises 196 residues: NAD(P)H-quinone oxidoreductase subunit I (196 aa).

2 consecutive 4Fe-4S ferredoxin-type domains span residues 55–84 (GRIHFEFDKCIACEVCVRVCPINLPVVDWE) and 95–124 (KHYSIDFGVCIFCGNCVEYCPTNCLSMTEE). Positions 64, 67, 70, 74, 104, 107, 110, and 114 each coordinate [4Fe-4S] cluster. Residues 170–196 (SPHDLPEGSQRSGKRPEEIIEEAEASS) are disordered.

It belongs to the complex I 23 kDa subunit family. As to quaternary structure, NDH-1 is composed of at least 11 different subunits. [4Fe-4S] cluster serves as cofactor.

Its subcellular location is the cellular thylakoid membrane. It catalyses the reaction a plastoquinone + NADH + (n+1) H(+)(in) = a plastoquinol + NAD(+) + n H(+)(out). The enzyme catalyses a plastoquinone + NADPH + (n+1) H(+)(in) = a plastoquinol + NADP(+) + n H(+)(out). NDH-1 shuttles electrons from an unknown electron donor, via FMN and iron-sulfur (Fe-S) centers, to quinones in the respiratory and/or the photosynthetic chain. The immediate electron acceptor for the enzyme in this species is believed to be plastoquinone. Couples the redox reaction to proton translocation, and thus conserves the redox energy in a proton gradient. The sequence is that of NAD(P)H-quinone oxidoreductase subunit I from Crocosphaera subtropica (strain ATCC 51142 / BH68) (Cyanothece sp. (strain ATCC 51142)).